We begin with the raw amino-acid sequence, 118 residues long: Small nuclear ribonucleoprotein Sm D2 (118 aa).

A disordered region spans residues 1 to 31 (MSLLNKPKSEMTPEELQKREEEEFNTGPLSV). N-acetylserine is present on S2. Residues K6 and K8 each participate in a glycyl lysine isopeptide (Lys-Gly) (interchain with G-Cter in SUMO2) cross-link. The segment covering 7-21 (PKSEMTPEELQKREE) has biased composition (basic and acidic residues). S9 bears the Phosphoserine mark. T12 carries the phosphothreonine modification. The Sm domain maps to 29-115 (LSVLTQSVKN…VIVVLRNPLI (87 aa)).

This sequence belongs to the snRNP core protein family. As to quaternary structure, core component of the spliceosomal U1, U2, U4 and U5 small nuclear ribonucleoproteins (snRNPs), the building blocks of the spliceosome. Most spliceosomal snRNPs contain a common set of Sm proteins, SNRPB, SNRPD1, SNRPD2, SNRPD3, SNRPE, SNRPF and SNRPG that assemble in a heptameric protein ring on the Sm site of the small nuclear RNA to form the core snRNP. Component of the U1 snRNP. The U1 snRNP is composed of the U1 snRNA and the 7 core Sm proteins SNRPB, SNRPD1, SNRPD2, SNRPD3, SNRPE, SNRPF and SNRPG, and at least three U1 snRNP-specific proteins SNRNP70/U1-70K, SNRPA/U1-A and SNRPC/U1-C. Component of the U4/U6-U5 tri-snRNP complex composed of the U4, U6 and U5 snRNAs and at least PRPF3, PRPF4, PRPF6, PRPF8, PRPF31, SNRNP200, TXNL4A, SNRNP40, SNRPB, SNRPD1, SNRPD2, SNRPD3, SNRPE, SNRPF, SNRPG, DDX23, CD2BP2, PPIH, SNU13, EFTUD2, SART1 and USP39, plus LSM2, LSM3, LSM4, LSM5, LSM6, LSM7 and LSM8. Component of the minor spliceosome, which splices U12-type introns. Part of the SMN-Sm complex that contains SMN1, GEMIN2/SIP1, DDX20/GEMIN3, GEMIN4, GEMIN5, GEMIN6, GEMIN7, GEMIN8, STRAP/UNRIP and the Sm proteins SNRPB, SNRPD1, SNRPD2, SNRPD3, SNRPE, SNRPF and SNRPG; catalyzes core snRNPs assembly. Forms a 6S pICln-Sm complex composed of CLNS1A/pICln, SNRPD1, SNRPD2, SNRPE, SNRPF and SNRPG; ring-like structure where CLNS1A/pICln mimics additional Sm proteins and which is unable to assemble into the core snRNP. Interacts with SMN1; the interaction is direct. Interacts with GEMIN2; the interaction is direct. Interacts with SNRPD1; the interaction is direct. Interacts with SNRPF; the interaction is direct.

The protein localises to the cytoplasm. The protein resides in the cytosol. It localises to the nucleus. Its function is as follows. Plays a role in pre-mRNA splicing as a core component of the spliceosomal U1, U2, U4 and U5 small nuclear ribonucleoproteins (snRNPs), the building blocks of the spliceosome. Component of both the pre-catalytic spliceosome B complex and activated spliceosome C complexes. As a component of the minor spliceosome, involved in the splicing of U12-type introns in pre-mRNAs. The protein is Small nuclear ribonucleoprotein Sm D2 (SNRPD2) of Homo sapiens (Human).